Consider the following 142-residue polypeptide: Rhinocerosin (142 aa).

The signal sequence occupies residues 1–16 (MMKLYIVFGFIAFSAA). Residues 17–70 (YVVPEGYYEPEYYPADGYESERVARASPAELIFDEDLADEPEVEEPQYYIRTRR) constitute a propeptide that is removed on maturation. The segment at 72–96 (LQPGAPNFPMPGSQLPTSITSNIEK) is disordered. Over residues 85–96 (QLPTSITSNIEK) the composition is skewed to polar residues.

This sequence belongs to the coleoptericin family. Strongly expressed in the fat body and the Malpighian tubules, and weakly expressed in hemocytes and midgut.

It is found in the secreted. Its function is as follows. Has strong antibacterial activity against E.coli, Streptococcus pyogenes, Staphylococcus aureus but not against Pseudomonas aeruginosa. The chain is Rhinocerosin from Oryctes rhinoceros (Coconut rhinoceros beetle).